The sequence spans 246 residues: MADS-box transcription factor 14 (246 aa).

An MADS-box domain is found at 1-61; that stretch reads MGRGKVQLKR…GKLYKYATDS (61 aa). The 91-residue stretch at 88–178 folds into the K-box domain; it reads QGNWCHEYRK…QKELVEKQKV (91 aa). The tract at residues 180 to 199 is disordered; it reads KQQVQWDQTQPQTSSSSSSF.

In terms of tissue distribution, highly expressed in sterile lemmas, at intermediate levels in stamens, and weakly in lemmas, paleas and carpels.

Its subcellular location is the nucleus. Functionally, probable transcription factor. The protein is MADS-box transcription factor 14 (MADS14) of Oryza sativa subsp. indica (Rice).